Consider the following 264-residue polypeptide: tRNA (guanine-N(1)-)-methyltransferase (264 aa).

S-adenosyl-L-methionine is bound by residues Gly-125 and 145-150 (LGDFVL).

The protein belongs to the RNA methyltransferase TrmD family. Homodimer.

It is found in the cytoplasm. The catalysed reaction is guanosine(37) in tRNA + S-adenosyl-L-methionine = N(1)-methylguanosine(37) in tRNA + S-adenosyl-L-homocysteine + H(+). Functionally, specifically methylates guanosine-37 in various tRNAs. The polypeptide is tRNA (guanine-N(1)-)-methyltransferase (Burkholderia cenocepacia (strain HI2424)).